We begin with the raw amino-acid sequence, 554 residues long: L-ascorbate oxidase homolog (554 aa).

The signal sequence occupies residues 1-21 (MGSGKVTFVALLLCLSVGVIA). Plastocyanin-like domains follow at residues 22 to 143 (EDPY…LNVH) and 196 to 296 (SAKV…AIIR). 3 N-linked (GlcNAc...) asparagine glycosylation sites follow: N31, N59, and N108. The cysteines at positions 101 and 540 are disulfide-linked. 3 N-linked (GlcNAc...) asparagine glycosylation sites follow: N332, N352, and N423. The Plastocyanin-like 3 domain occupies 411 to 521 (DPSKLTIATN…LGEQLYFSVL (111 aa)).

It belongs to the multicopper oxidase family. In terms of tissue distribution, pollen.

The protein resides in the secreted. It localises to the extracellular space. Probable oxidoreductase that may be involved in pollen tube growth. In Nicotiana tabacum (Common tobacco), this protein is L-ascorbate oxidase homolog.